We begin with the raw amino-acid sequence, 235 residues long: Octanoyltransferase (235 aa).

A BPL/LPL catalytic domain is found at 59-235 (PGSSQAVWLL…KKSLTERFGL (177 aa)). Substrate-binding positions include 101–108 (RGGEVTHH), 168–170 (SIG), and 181–183 (GLS). Cys199 (acyl-thioester intermediate) is an active-site residue.

Belongs to the LipB family.

It localises to the cytoplasm. It carries out the reaction octanoyl-[ACP] + L-lysyl-[protein] = N(6)-octanoyl-L-lysyl-[protein] + holo-[ACP] + H(+). Its pathway is protein modification; protein lipoylation via endogenous pathway; protein N(6)-(lipoyl)lysine from octanoyl-[acyl-carrier-protein]: step 1/2. In terms of biological role, catalyzes the transfer of endogenously produced octanoic acid from octanoyl-acyl-carrier-protein onto the lipoyl domains of lipoate-dependent enzymes. Lipoyl-ACP can also act as a substrate although octanoyl-ACP is likely to be the physiological substrate. The polypeptide is Octanoyltransferase (Prochlorococcus marinus (strain MIT 9211)).